Reading from the N-terminus, the 118-residue chain is Large ribosomal subunit protein uL18 (118 aa).

It belongs to the universal ribosomal protein uL18 family. As to quaternary structure, part of the 50S ribosomal subunit; part of the 5S rRNA/L5/L18/L25 subcomplex. Contacts the 5S and 23S rRNAs.

Functionally, this is one of the proteins that bind and probably mediate the attachment of the 5S RNA into the large ribosomal subunit, where it forms part of the central protuberance. This Campylobacter jejuni subsp. jejuni serotype O:2 (strain ATCC 700819 / NCTC 11168) protein is Large ribosomal subunit protein uL18.